We begin with the raw amino-acid sequence, 239 residues long: Lactate utilization protein A (239 aa).

The protein belongs to the LutA/YkgE family.

In terms of biological role, is involved in L-lactate degradation and allows cells to grow with lactate as the sole carbon source. The protein is Lactate utilization protein A of Geobacillus thermodenitrificans (strain NG80-2).